Here is a 235-residue protein sequence, read N- to C-terminus: Urease accessory protein UreF (235 aa).

It belongs to the UreF family. UreD, UreF and UreG form a complex that acts as a GTP-hydrolysis-dependent molecular chaperone, activating the urease apoprotein by helping to assemble the nickel containing metallocenter of UreC. The UreE protein probably delivers the nickel.

The protein localises to the cytoplasm. Functionally, required for maturation of urease via the functional incorporation of the urease nickel metallocenter. The chain is Urease accessory protein UreF from Haemophilus influenzae (strain 86-028NP).